We begin with the raw amino-acid sequence, 415 residues long: Squalene synthase 1 (415 aa).

2 helical membrane passes run 281 to 301 and 391 to 411; these read AIFR…ALCF and LIAI…SNLL.

Belongs to the phytoene/squalene synthase family. Mg(2+) serves as cofactor. It depends on Mn(2+) as a cofactor. Mostly expressed in the shoot apex (buds) and roots, and, to a lower extent, in stems, leaves, flowers and seeds.

The protein localises to the endoplasmic reticulum membrane. It carries out the reaction 2 (2E,6E)-farnesyl diphosphate + NADH + H(+) = squalene + 2 diphosphate + NAD(+). The enzyme catalyses 2 (2E,6E)-farnesyl diphosphate + NADPH + H(+) = squalene + 2 diphosphate + NADP(+). It functions in the pathway terpene metabolism; lanosterol biosynthesis; lanosterol from farnesyl diphosphate: step 1/3. Its function is as follows. Component of the triterpene saponins (e.g. ginsenosides or panaxosides) and phytosterols biosynthetic pathways. Catalyzes the biosynthesis of squalene. This Panax ginseng (Korean ginseng) protein is Squalene synthase 1.